The chain runs to 174 residues: Variant surface antigen F (174 aa).

Positions 1–29 (MKKSIFSKKLLFSFGSLVALAAIPLITIS) are cleaved as a signal peptide. A lipid anchor (N-palmitoyl cysteine) is attached at C30. C30 carries the S-diacylglycerol cysteine lipid modification. Positions 32 to 174 (QTNTDQSQQP…PEQGNSQVSK (143 aa)) are disordered. Residues 43–53 (SGSGSGSGTSN) are compositionally biased toward gly residues. 9 repeat units span residues 55-67 (SGSTPTPEQGNNQ), 68-80 (GGSTPTPEQGNNQ), 81-93 (GGSTPTPEQGNNQ), 94-106 (GGSTPTPEQGNNQ), 107-119 (GGSTPTPEQGNNQ), 120-132 (GGSTPTPEQGNNQ), 133-145 (GGSTPTPEQGNNQ), 146-158 (GGSTPTPEQGNNQ), and 159-171 (GGSTPTPEQGNSQ). Residues 55-171 (SGSTPTPEQG…TPTPEQGNSQ (117 aa)) form a 9 X 13 AA tandem repeats region. A compositionally biased stretch (polar residues) spans 62-174 (EQGNNQGGST…PEQGNSQVSK (113 aa)).

The protein resides in the cell membrane. Functionally, responsible for the antigenic diversity for host adaptation. Expression in E.coli of a construct containing vlpD, vlpE, and vlpF yields antigenically distinguishable products corresponding to each gene. The polypeptide is Variant surface antigen F (vlpF) (Mesomycoplasma hyorhinis (Mycoplasma hyorhinis)).